A 410-amino-acid chain; its full sequence is Multidrug resistance protein MdtM (410 aa).

The Cytoplasmic portion of the chain corresponds to 1-11 (MPRFFARHAAT). The helical transmembrane segment at 12 to 32 (LFFPMALILYDFAAYLSTDLI) threads the bilayer. Residues 33–48 (QPGIINVVRDFNADVS) lie on the Periplasmic side of the membrane. Residues 49–69 (LAPAAVSLYLAGGMALQWLLG) form a helical membrane-spanning segment. The Cytoplasmic portion of the chain corresponds to 70–78 (PLSDRIGRK). A helical transmembrane segment spans residues 79–99 (PVLITGALIFTLACAATMFTT). The Periplasmic portion of the chain corresponds to 100 to 103 (SMTQ). A helical membrane pass occupies residues 104–124 (FLIARAIQGTSICFIATVGYV). The Cytoplasmic segment spans residues 125–140 (TVQEAFGQTKGIKLMA). A helical membrane pass occupies residues 141–161 (IITSIVLIAPIIGPLSGAALM). Residues 162–167 (HFVHWK) lie on the Periplasmic side of the membrane. Residues 168 to 188 (VLFAIIAVMGFISFVGLLLAM) form a helical membrane-spanning segment. Residues 189–216 (PETVKRGAVPFSAKSVLRDFRNVFCNRL) are Cytoplasmic-facing. Residues 217–237 (FLFGAATISLSYIPMMSWVAV) form a helical membrane-spanning segment. At 238–251 (SPVILIDAGGLTTS) the chain is on the periplasmic side. The helical transmembrane segment at 252 to 272 (QFAWTQVPVFGAVIVANAIVA) threads the bilayer. Residues 273 to 282 (RFVKDPTEPR) lie on the Cytoplasmic side of the membrane. A helical transmembrane segment spans residues 283-303 (FIWRAVPIQLVGLALLIIGNL). The Periplasmic segment spans residues 304–307 (LSPH). The chain crosses the membrane as a helical span at residues 308 to 328 (VWLWSVLGTSLYAFGIGLIFP). Residues 329–348 (TLFRFTLFSNNLPKGTVSAS) are Cytoplasmic-facing. Residues 349–369 (LNMVILMVMSVSVEIGRWLWF) traverse the membrane as a helical segment. At 370–373 (NGGR) the chain is on the periplasmic side. The chain crosses the membrane as a helical span at residues 374-394 (LPFHLLAVVAGVIVVFTLAGL). Topologically, residues 395–410 (LNRVRQHQAAELAEEQ) are cytoplasmic.

Belongs to the major facilitator superfamily.

The protein localises to the cell inner membrane. Proton-dependent efflux pump. Confers resistance to a broad spectrum of chemically unrelated substrates. In Escherichia coli O157:H7, this protein is Multidrug resistance protein MdtM (mdtM).